The chain runs to 806 residues: Fibroblast growth factor receptor 3 (806 aa).

The signal sequence occupies residues 1-19 (MRAAWGSVWCLCLAAAVGA). Residues 20-364 (LPAARRRGAE…ELMEMDDSGS (345 aa)) lie on the Extracellular side of the membrane. In terms of domain architecture, Ig-like C2-type 1 spans 24-124 (RRRGAERSGG…VLGNFTVRVT (101 aa)). A disulfide bridge links Cys-61 with Cys-107. N-linked (GlcNAc...) asparagine glycosylation is found at Asn-83, Asn-96, and Asn-118. A disordered region spans residues 121–146 (VRVTDSPSSGDDEDDDDESEDTGVPF). The span at 130-141 (GDDEDDDDESED) shows a compositional bias: acidic residues. 2 consecutive Ig-like C2-type domains span residues 150-238 (PDKM…YQLD) and 247-349 (PILQ…AWLT). Residues Cys-170 and Cys-222 are joined by a disulfide bond. N-linked (GlcNAc...) asparagine glycans are attached at residues Asn-219, Asn-256, Asn-288, Asn-309, and Asn-322. Cys-269 and Cys-333 are oxidised to a cystine. A helical transmembrane segment spans residues 365-389 (VYAGILSYGTGLVLFILVLVIVIIC). Topologically, residues 390 to 806 (RMKMPNKKAM…HVPCNGVIRT (417 aa)) are cytoplasmic. Residues 466-755 (LTLGKPLGEG…LTMTSTDEYL (290 aa)) enclose the Protein kinase domain. ATP is bound by residues 472-480 (LGEGCFGQV) and Lys-502. Asp-611 functions as the Proton acceptor in the catalytic mechanism. Residues Tyr-641, Tyr-642, Tyr-718, and Tyr-754 each carry the phosphotyrosine; by autocatalysis modification.

Belongs to the protein kinase superfamily. Tyr protein kinase family. Fibroblast growth factor receptor subfamily. In terms of assembly, monomer. Homodimer after ligand binding. In terms of processing, autophosphorylated. Binding of FGF family members together with heparan sulfate proteoglycan or heparin promotes receptor dimerization and autophosphorylation on tyrosine residues. Autophosphorylation occurs in trans between the two FGFR molecules present in the dimer.

The protein localises to the cell membrane. It catalyses the reaction L-tyrosyl-[protein] + ATP = O-phospho-L-tyrosyl-[protein] + ADP + H(+). With respect to regulation, present in an inactive conformation in the absence of bound ligand. Ligand binding leads to dimerization and activation by autophosphorylation on tyrosine residues. Functionally, tyrosine-protein kinase that acts as a cell-surface receptor for fibroblast growth factors and plays an essential role in the regulation of cell proliferation, differentiation and apoptosis. Plays an essential role in the regulation of chondrocyte differentiation, proliferation and apoptosis, and is required for normal skeleton development. Regulates both osteogenesis and postnatal bone mineralization by osteoblasts. Promotes apoptosis in chondrocytes, but can also promote cancer cell proliferation. Phosphorylates PLCG1, CBL and FRS2. Ligand binding leads to the activation of several signaling cascades. Activation of PLCG1 leads to the production of the cellular signaling molecules diacylglycerol and inositol 1,4,5-trisphosphate. Phosphorylation of FRS2 triggers recruitment of GRB2, GAB1, PIK3R1 and SOS1, and mediates activation of RAS, MAPK1/ERK2, MAPK3/ERK1 and the MAP kinase signaling pathway, as well as of the AKT1 signaling pathway. In Gallus gallus (Chicken), this protein is Fibroblast growth factor receptor 3 (FGFR3).